Reading from the N-terminus, the 319-residue chain is Acetyl esterase (319 aa).

Residues 91–93 (HGG) carry the Involved in the stabilization of the negatively charged intermediate by the formation of the oxyanion hole motif. Catalysis depends on residues serine 165, aspartate 262, and histidine 292.

This sequence belongs to the 'GDXG' lipolytic enzyme family. As to quaternary structure, homodimer. Interacts with MalT and MelA.

It is found in the cytoplasm. In terms of biological role, displays esterase activity towards short chain fatty esters (acyl chain length of up to 8 carbons). Able to hydrolyze triacetylglycerol (triacetin) and tributyrylglycerol (tributyrin), but not trioleylglycerol (triolein) or cholesterol oleate. Negatively regulates MalT activity by antagonizing maltotriose binding. Inhibits MelA galactosidase activity. The chain is Acetyl esterase from Escherichia coli O45:K1 (strain S88 / ExPEC).